Here is an 81-residue protein sequence, read N- to C-terminus: Toxin TdNa10 (81 aa).

The first 20 residues, 1-20, serve as a signal peptide directing secretion; it reads MWTFAIVLAFLLIGLDEGEA. Residues 21-81 form the LCN-type CS-alpha/beta domain; the sequence is LDGYPLSKNN…KMYPGELPCH (61 aa). 4 disulfides stabilise this stretch: C32–C80, C36–C57, C42–C62, and C46–C64.

Belongs to the long (4 C-C) scorpion toxin superfamily. Sodium channel inhibitor family. Beta subfamily. As to expression, expressed by the venom gland.

Its subcellular location is the secreted. Its function is as follows. Alpha toxins bind voltage-independently at site-3 of sodium channels (Nav) and inhibit the inactivation of the activated channels, thereby blocking neuronal transmission. This toxin binds, in vitro, to sodium channels and inhibits the inactivation of the activated channels. Seems not toxic to mice, crickets and sweet-water shrimps. This chain is Toxin TdNa10, found in Tityus discrepans (Venezuelan scorpion).